The primary structure comprises 60 residues: Large ribosomal subunit protein bL33 (60 aa).

The protein belongs to the bacterial ribosomal protein bL33 family.

This Flavobacterium johnsoniae (strain ATCC 17061 / DSM 2064 / JCM 8514 / BCRC 14874 / CCUG 350202 / NBRC 14942 / NCIMB 11054 / UW101) (Cytophaga johnsonae) protein is Large ribosomal subunit protein bL33.